The chain runs to 247 residues: Probable dihydroorotate dehydrogenase B (NAD(+)), electron transfer subunit (247 aa).

One can recognise an FAD-binding FR-type domain in the interval 1-87 (MLRRVSIEET…RGPYGHGFSG (87 aa)). [2Fe-2S] cluster is bound by residues C201, C206, C209, and C217.

Belongs to the PyrK family. In terms of assembly, heterotetramer of 2 PyrK and 2 PyrD type B subunits. [2Fe-2S] cluster serves as cofactor. Requires FAD as cofactor.

Its pathway is pyrimidine metabolism; UMP biosynthesis via de novo pathway; orotate from (S)-dihydroorotate (NAD(+) route): step 1/1. In terms of biological role, responsible for channeling the electrons from the oxidation of dihydroorotate from the FMN redox center in the PyrD type B subunit to the ultimate electron acceptor NAD(+). This Pyrococcus furiosus (strain ATCC 43587 / DSM 3638 / JCM 8422 / Vc1) protein is Probable dihydroorotate dehydrogenase B (NAD(+)), electron transfer subunit.